A 145-amino-acid chain; its full sequence is Small ribosomal subunit protein bS6 (145 aa).

Belongs to the bacterial ribosomal protein bS6 family.

Binds together with bS18 to 16S ribosomal RNA. The sequence is that of Small ribosomal subunit protein bS6 from Mycoplasmopsis agalactiae (strain NCTC 10123 / CIP 59.7 / PG2) (Mycoplasma agalactiae).